The chain runs to 84 residues: Putative membrane protein insertion efficiency factor (84 aa).

This sequence belongs to the UPF0161 family.

It localises to the cell inner membrane. In terms of biological role, could be involved in insertion of integral membrane proteins into the membrane. This is Putative membrane protein insertion efficiency factor from Shewanella halifaxensis (strain HAW-EB4).